The primary structure comprises 351 residues: Quinolinate phosphoribosyltransferase [decarboxylating] 2, mitochondrial (351 aa).

Substrate is bound by residues Arg-142, 173–175 (TRK), Arg-197, Lys-207, Glu-240, Asp-267, 299–301 (SGN), and 320–322 (SGA).

This sequence belongs to the NadC/ModD family.

Its subcellular location is the mitochondrion. The catalysed reaction is nicotinate beta-D-ribonucleotide + CO2 + diphosphate = quinolinate + 5-phospho-alpha-D-ribose 1-diphosphate + 2 H(+). It participates in alkaloid biosynthesis; nicotine biosynthesis. It functions in the pathway cofactor biosynthesis; NAD(+) biosynthesis; nicotinate D-ribonucleotide from quinolinate: step 1/1. Involved in the biosynthesis of pyridine alkaloid natural products, leading mainly to the production of anabasine, anatabine, nicotine and nornicotine, effective deterrents against herbivores with antiparasitic and pesticide properties (neurotoxins); nornicotine serves as the precursor in the synthesis of the carcinogen compound N'-nitrosonornicotine (NNN). Involved in the catabolism of quinolinic acid (QA). The sequence is that of Quinolinate phosphoribosyltransferase [decarboxylating] 2, mitochondrial from Nicotiana glauca (Glaucous tobacco).